The chain runs to 374 residues: Ribosomal RNA large subunit methyltransferase G (374 aa).

Belongs to the methyltransferase superfamily. RlmG family.

The protein localises to the cytoplasm. The enzyme catalyses guanosine(1835) in 23S rRNA + S-adenosyl-L-methionine = N(2)-methylguanosine(1835) in 23S rRNA + S-adenosyl-L-homocysteine + H(+). Functionally, specifically methylates the guanine in position 1835 (m2G1835) of 23S rRNA. In Pseudomonas syringae pv. tomato (strain ATCC BAA-871 / DC3000), this protein is Ribosomal RNA large subunit methyltransferase G.